We begin with the raw amino-acid sequence, 415 residues long: Phakinin (415 aa).

The tract at residues 1–26 (MSTRRVVVDAPAGASSSMPLQRHKAS) is disordered. The residue at position 2 (Ser2) is an N-acetylserine. A head region spans residues 2–114 (STRRVVVDAP…LGAVEDLGGC (113 aa)). Residues Ser26, Ser32, and Ser35 each carry the phosphoserine modification. Thr53 is subject to Phosphothreonine. A phosphoserine mark is found at Ser90 and Ser100. Residues 104-415 (DLGAVEDLGG…HALLDREESS (312 aa)) form the IF rod domain. Coiled-coil stretches lie at residues 115 to 144 (LVEY…ESKA), 199 to 248 (RKAA…VKML), and 295 to 395 (QAKQ…LSHK). Positions 396-415 (CQLQRDVASYHALLDREESS) are tail.

This sequence belongs to the intermediate filament family. In terms of assembly, part of a complex required for lens intermediate filament formation composed of BFSP1, BFSP2 and CRYAA. Found in a complex composed of PPL (via C-terminal linker domain), BFSP1 and BFSP2 in the retinal lens. Within the complex interacts with PPL (via C-terminal linker domain) and with BFSP1. Identified in a complex that contains VIM, EZR, AHNAK, BFSP1, BFSP2, ANK2, PLEC, PRX and spectrin. Interacts with LGSN. Interacts with VIM. As to expression, abundantly expressed in both the inner and outer cortex of the retina, expressed at a lower level in the nucleus of the retina (at protein level). Detected in eye lens fiber cells (at protein level).

The protein resides in the cell membrane. It is found in the cytoplasm. It localises to the cytoskeleton. Its subcellular location is the cell cortex. Its function is as follows. Required for the correct formation of lens intermediate filaments as part of a complex composed of BFSP1, BFSP2 and CRYAA. Plays a role in maintenance of retinal lens optical clarity. This chain is Phakinin (BFSP2), found in Bos taurus (Bovine).